The following is a 91-amino-acid chain: Small ribosomal subunit protein uS19 (91 aa).

It belongs to the universal ribosomal protein uS19 family.

Functionally, protein S19 forms a complex with S13 that binds strongly to the 16S ribosomal RNA. In Synechococcus sp. (strain RCC307), this protein is Small ribosomal subunit protein uS19.